Here is a 349-residue protein sequence, read N- to C-terminus: Protein-glutamate methylesterase/protein-glutamine glutaminase (349 aa).

The Response regulatory domain maps to 5–122; sequence RVLSVDDSAL…REGMLAYSEM (118 aa). Asp56 bears the 4-aspartylphosphate mark. The region spanning 152-344 is the CheB-type methylesterase domain; sequence LLSSEKLIAI…QQMLAKISAG (193 aa). Residues Ser164, His190, and Asp286 contribute to the active site.

It belongs to the CheB family. In terms of processing, phosphorylated by CheA. Phosphorylation of the N-terminal regulatory domain activates the methylesterase activity.

Its subcellular location is the cytoplasm. It carries out the reaction [protein]-L-glutamate 5-O-methyl ester + H2O = L-glutamyl-[protein] + methanol + H(+). The catalysed reaction is L-glutaminyl-[protein] + H2O = L-glutamyl-[protein] + NH4(+). Its function is as follows. Involved in chemotaxis. Part of a chemotaxis signal transduction system that modulates chemotaxis in response to various stimuli. Catalyzes the demethylation of specific methylglutamate residues introduced into the chemoreceptors (methyl-accepting chemotaxis proteins or MCP) by CheR. Also mediates the irreversible deamidation of specific glutamine residues to glutamic acid. The polypeptide is Protein-glutamate methylesterase/protein-glutamine glutaminase (Escherichia coli O157:H7).